Here is a 338-residue protein sequence, read N- to C-terminus: Ketol-acid reductoisomerase (NADP(+)) (338 aa).

Positions 1 to 181 (MKVFYDKDCD…GGGRTGIIET (181 aa)) constitute a KARI N-terminal Rossmann domain. Residues 24–27 (YGSQ), Arg-47, Ser-50, Thr-52, and 82–85 (DEFQ) each bind NADP(+). His-107 is an active-site residue. NADP(+) is bound at residue Gly-133. The KARI C-terminal knotted domain maps to 182–327 (TFKDETETDL…EQLRSMMPWI (146 aa)). Mg(2+) contacts are provided by Asp-190, Glu-194, Glu-226, and Glu-230. Substrate is bound at residue Ser-251.

The protein belongs to the ketol-acid reductoisomerase family. It depends on Mg(2+) as a cofactor.

It catalyses the reaction (2R)-2,3-dihydroxy-3-methylbutanoate + NADP(+) = (2S)-2-acetolactate + NADPH + H(+). It carries out the reaction (2R,3R)-2,3-dihydroxy-3-methylpentanoate + NADP(+) = (S)-2-ethyl-2-hydroxy-3-oxobutanoate + NADPH + H(+). Its pathway is amino-acid biosynthesis; L-isoleucine biosynthesis; L-isoleucine from 2-oxobutanoate: step 2/4. The protein operates within amino-acid biosynthesis; L-valine biosynthesis; L-valine from pyruvate: step 2/4. Its function is as follows. Involved in the biosynthesis of branched-chain amino acids (BCAA). Catalyzes an alkyl-migration followed by a ketol-acid reduction of (S)-2-acetolactate (S2AL) to yield (R)-2,3-dihydroxy-isovalerate. In the isomerase reaction, S2AL is rearranged via a Mg-dependent methyl migration to produce 3-hydroxy-3-methyl-2-ketobutyrate (HMKB). In the reductase reaction, this 2-ketoacid undergoes a metal-dependent reduction by NADPH to yield (R)-2,3-dihydroxy-isovalerate. This chain is Ketol-acid reductoisomerase (NADP(+)), found in Pseudomonas putida (strain W619).